We begin with the raw amino-acid sequence, 552 residues long: Putative transport protein YPTS_4123 (552 aa).

Transmembrane regions (helical) follow at residues 1 to 21, 26 to 46, 65 to 85, 96 to 116, 119 to 139, and 158 to 178; these read MSAI…GLWI, IYGV…VGHF, FGLI…FFSS, FAIL…KLFA, LPII…LGAA, and MGYA…MWLI. RCK C-terminal domains lie at 192–276 and 279–361; these read AFDS…VVGE and DVTL…IVGN. The next 6 membrane-spanning stretches (helical) occupy residues 371-391, 393-413, 439-459, 464-484, 493-513, and 530-550; these read MLPV…PLFV, GFPA…ALIL, IVLF…NTLV, LAWI…VGIL, YLTL…LAFA, and VYPL…VLFW.

This sequence belongs to the AAE transporter (TC 2.A.81) family. YidE subfamily.

The protein resides in the cell membrane. The polypeptide is Putative transport protein YPTS_4123 (Yersinia pseudotuberculosis serotype IB (strain PB1/+)).